A 276-amino-acid chain; its full sequence is 3-methyl-2-oxobutanoate hydroxymethyltransferase (276 aa).

Mg(2+) contacts are provided by D49 and D88. 3-methyl-2-oxobutanoate-binding positions include 49-50 (DS), D88, and K118. E120 serves as a coordination point for Mg(2+). The active-site Proton acceptor is the E187.

The protein belongs to the PanB family. Homodecamer; pentamer of dimers. The cofactor is Mg(2+).

Its subcellular location is the cytoplasm. The catalysed reaction is 3-methyl-2-oxobutanoate + (6R)-5,10-methylene-5,6,7,8-tetrahydrofolate + H2O = 2-dehydropantoate + (6S)-5,6,7,8-tetrahydrofolate. Its pathway is cofactor biosynthesis; (R)-pantothenate biosynthesis; (R)-pantoate from 3-methyl-2-oxobutanoate: step 1/2. Catalyzes the reversible reaction in which hydroxymethyl group from 5,10-methylenetetrahydrofolate is transferred onto alpha-ketoisovalerate to form ketopantoate. The polypeptide is 3-methyl-2-oxobutanoate hydroxymethyltransferase (Afipia carboxidovorans (strain ATCC 49405 / DSM 1227 / KCTC 32145 / OM5) (Oligotropha carboxidovorans)).